Reading from the N-terminus, the 513-residue chain is MEMAKEQELILVLDFGSQYNQLITRRIREMGVYSELHDHEISIEEIKKMNPKGIILSGGPNSVYEEGSFTIDPEIYNLGIPVLGICYGMQLTTKLLGGKVERANEREYGKAIINAKSDELFAGLPAEQTVWMSHSDKVIEIPEGFEVIADSPSTDYAAIEDKKRRIYGVQFHPEVRHTEYGNDLLNNFVRRVCDCKGQWTMENFIEIEIEKIRQRVGDRRVLCAMSGGVDSSVVAVLLHKAIGDQLTCIFVDHGLLRKGEGDMVMEQFGEGFNMNIIRVNAKDRFMNKLKGVSDPEQKRKIIGNEFVYVFDDEASKLKGVDFLAQGTLYTDVIESGTKTAQTIKSHHNVGGLPEDMEFELIEPINTLFKDEVRKLGIELGIPEHLVWRQPFPGPGLGIRVLGEITEDKLEIVRESDAILRQVIREEGLEREIWQYFTVLPNIQSVGVMGDYRTYDHTVGIRAVTSIDGMTSDFARIDWEVLQKISSRIVNEVDHVNRVVYDITSKPPSTIEWE.

The Glutamine amidotransferase type-1 domain occupies 9-198 (LILVLDFGSQ…VRRVCDCKGQ (190 aa)). Catalysis depends on Cys86, which acts as the Nucleophile. Residues His172 and Glu174 contribute to the active site. The GMPS ATP-PPase domain occupies 199 to 388 (WTMENFIEIE…LGIPEHLVWR (190 aa)). 226 to 232 (SGGVDSS) serves as a coordination point for ATP.

In terms of assembly, homodimer.

It carries out the reaction XMP + L-glutamine + ATP + H2O = GMP + L-glutamate + AMP + diphosphate + 2 H(+). It participates in purine metabolism; GMP biosynthesis; GMP from XMP (L-Gln route): step 1/1. In terms of biological role, catalyzes the synthesis of GMP from XMP. The chain is GMP synthase [glutamine-hydrolyzing] from Staphylococcus aureus (strain Mu3 / ATCC 700698).